Here is a 69-residue protein sequence, read N- to C-terminus: Large ribosomal subunit protein uL29 (69 aa).

Belongs to the universal ribosomal protein uL29 family.

This chain is Large ribosomal subunit protein uL29, found in Polaromonas sp. (strain JS666 / ATCC BAA-500).